The chain runs to 344 residues: Selenide, water dikinase (344 aa).

Cys-16 is an active-site residue. Residues Lys-19 and 47 to 49 (SRD) contribute to the ATP site. A Mg(2+)-binding site is contributed by Asp-50. ATP-binding positions include Asp-67, Asp-90, and 138-140 (GHS). Asp-90 contributes to the Mg(2+) binding site. Asp-226 lines the Mg(2+) pocket.

This sequence belongs to the selenophosphate synthase 1 family. Class I subfamily. In terms of assembly, homodimer. The cofactor is Mg(2+).

The catalysed reaction is hydrogenselenide + ATP + H2O = selenophosphate + AMP + phosphate + 2 H(+). Synthesizes selenophosphate from selenide and ATP. In Bordetella bronchiseptica (strain ATCC BAA-588 / NCTC 13252 / RB50) (Alcaligenes bronchisepticus), this protein is Selenide, water dikinase.